The sequence spans 207 residues: MNSLSTSAFSLGLLLVMATAFPTPGPLAGDSKDDATSISLPLTSANKVEELIKYILGKISALRKEMCDKFNKCEDSKEALAENNLHLPILEGKDGCFQSGFNQETCLTRITTGLMEFQLHLNILQNNYEGDKENAQSVHMSTKILVQMLKSKVKNQDEVTTPDPTTDATLQAILQSQNEWLKHTTIHLILRSLEDFLQFSLRAVRIM.

The first 20 residues, 1–20 (MNSLSTSAFSLGLLLVMATA), serve as a signal peptide directing secretion. An intrachain disulfide couples C67 to C73. Residue S76 is modified to Phosphoserine. C96 and C106 are joined by a disulfide.

Belongs to the IL-6 superfamily. Component of a hexamer of two molecules each of IL6, IL6R and IL6ST; first binds to IL6R to associate with the signaling subunit IL6ST. Interacts with IL6R (via the N-terminal ectodomain); this interaction may be affected by IL6R-binding with SORL1, hence decreasing IL6 cis signaling. Interacts with SORL1 (via the N-terminal ectodomain); this interaction leads to IL6 internalization and lysosomal degradation. May form a trimeric complex with the soluble SORL1 ectodomain and soluble IL6R receptor; this interaction might stabilize circulating IL6, hence promoting IL6 trans signaling.

The protein resides in the secreted. Cytokine with a wide variety of biological functions in immunity, tissue regeneration, and metabolism. Binds to IL6R, then the complex associates to the signaling subunit IL6ST/gp130 to trigger the intracellular IL6-signaling pathway. The interaction with the membrane-bound IL6R and IL6ST stimulates 'classic signaling', whereas the binding of IL6 and soluble IL6R to IL6ST stimulates 'trans-signaling'. Alternatively, 'cluster signaling' occurs when membrane-bound IL6:IL6R complexes on transmitter cells activate IL6ST receptors on neighboring receiver cells. Functionally, IL6 is a potent inducer of the acute phase response. Rapid production of IL6 contributes to host defense during infection and tissue injury, but excessive IL6 synthesis is involved in disease pathology. In the innate immune response, is synthesized by myeloid cells, such as macrophages and dendritic cells, upon recognition of pathogens through toll-like receptors (TLRs) at the site of infection or tissue injury. In the adaptive immune response, is required for the differentiation of B cells into immunoglobulin-secreting cells. Plays a major role in the differentiation of CD4(+) T cell subsets. Essential factor for the development of T follicular helper (Tfh) cells that are required for the induction of germinal-center formation. Required to drive naive CD4(+) T cells to the Th17 lineage. Also required for proliferation of myeloma cells and the survival of plasmablast cells. In terms of biological role, acts as an essential factor in bone homeostasis and on vessels directly or indirectly by induction of VEGF, resulting in increased angiogenesis activity and vascular permeability. Induces, through 'trans-signaling' and synergistically with IL1B and TNF, the production of VEGF. Involved in metabolic controls, is discharged into the bloodstream after muscle contraction increasing lipolysis and improving insulin resistance. 'Trans-signaling' in central nervous system also regulates energy and glucose homeostasis. Mediates, through GLP-1, crosstalk between insulin-sensitive tissues, intestinal L cells and pancreatic islets to adapt to changes in insulin demand. Also acts as a myokine. Plays a protective role during liver injury, being required for maintenance of tissue regeneration. Also has a pivotal role in iron metabolism by regulating HAMP/hepcidin expression upon inflammation or bacterial infection. Through activation of IL6ST-YAP-NOTCH pathway, induces inflammation-induced epithelial regeneration. The sequence is that of Interleukin-6 (IL6) from Vulpes vulpes (Red fox).